Here is a 368-residue protein sequence, read N- to C-terminus: NAD(P)H-quinone oxidoreductase subunit 1, chloroplastic (368 aa).

6 consecutive transmembrane segments (helical) span residues 27 to 47, 97 to 117, 130 to 150, 269 to 289, 308 to 328, and 348 to 368; these read FIWI…GVLV, WLFN…YLVI, IGVF…LMAG, SSLF…PFLL, IIIG…IAIM, and FLLP…AFLL.

The protein belongs to the complex I subunit 1 family. In terms of assembly, NDH is composed of at least 16 different subunits, 5 of which are encoded in the nucleus.

The protein resides in the plastid. Its subcellular location is the chloroplast thylakoid membrane. The catalysed reaction is a plastoquinone + NADH + (n+1) H(+)(in) = a plastoquinol + NAD(+) + n H(+)(out). It carries out the reaction a plastoquinone + NADPH + (n+1) H(+)(in) = a plastoquinol + NADP(+) + n H(+)(out). Its function is as follows. NDH shuttles electrons from NAD(P)H:plastoquinone, via FMN and iron-sulfur (Fe-S) centers, to quinones in the photosynthetic chain and possibly in a chloroplast respiratory chain. The immediate electron acceptor for the enzyme in this species is believed to be plastoquinone. Couples the redox reaction to proton translocation, and thus conserves the redox energy in a proton gradient. In Physcomitrium patens (Spreading-leaved earth moss), this protein is NAD(P)H-quinone oxidoreductase subunit 1, chloroplastic.